Reading from the N-terminus, the 336-residue chain is Shematrin-like protein 1 (336 aa).

The N-terminal stretch at 1–16 is a signal peptide; the sequence is MLRFIAIVALIATVNA.

In terms of tissue distribution, prismatic layer of shell (at protein level). Expressed primarily in the mantle with highest level in the mantle edge and lower level in the mantle pallium.

The protein localises to the secreted. The sequence is that of Shematrin-like protein 1 from Pinctada maxima (Silver-lipped pearl oyster).